A 446-amino-acid polypeptide reads, in one-letter code: Exodeoxyribonuclease 7 large subunit (446 aa).

This sequence belongs to the XseA family. Heterooligomer composed of large and small subunits.

The protein resides in the cytoplasm. It carries out the reaction Exonucleolytic cleavage in either 5'- to 3'- or 3'- to 5'-direction to yield nucleoside 5'-phosphates.. Its function is as follows. Bidirectionally degrades single-stranded DNA into large acid-insoluble oligonucleotides, which are then degraded further into small acid-soluble oligonucleotides. The polypeptide is Exodeoxyribonuclease 7 large subunit (Vibrio cholerae serotype O1 (strain ATCC 39315 / El Tor Inaba N16961)).